Here is a 93-residue protein sequence, read N- to C-terminus: DNA-directed RNA polymerase subunit Rpo11 (93 aa).

This sequence belongs to the archaeal Rpo11/eukaryotic RPB11/RPC19 RNA polymerase subunit family. In terms of assembly, part of the RNA polymerase complex.

It localises to the cytoplasm. The catalysed reaction is RNA(n) + a ribonucleoside 5'-triphosphate = RNA(n+1) + diphosphate. DNA-dependent RNA polymerase (RNAP) catalyzes the transcription of DNA into RNA using the four ribonucleoside triphosphates as substrates. In Sulfurisphaera tokodaii (strain DSM 16993 / JCM 10545 / NBRC 100140 / 7) (Sulfolobus tokodaii), this protein is DNA-directed RNA polymerase subunit Rpo11.